The chain runs to 261 residues: Type III pantothenate kinase (261 aa).

6–13 (DVGNTNTV) contacts ATP. 107 to 110 (GADR) contributes to the substrate binding site. Catalysis depends on D109, which acts as the Proton acceptor. D129 lines the K(+) pocket. T132 lines the ATP pocket. A substrate-binding site is contributed by T183.

The protein belongs to the type III pantothenate kinase family. Homodimer. NH4(+) is required as a cofactor. The cofactor is K(+).

The protein localises to the cytoplasm. The enzyme catalyses (R)-pantothenate + ATP = (R)-4'-phosphopantothenate + ADP + H(+). The protein operates within cofactor biosynthesis; coenzyme A biosynthesis; CoA from (R)-pantothenate: step 1/5. Catalyzes the phosphorylation of pantothenate (Pan), the first step in CoA biosynthesis. The chain is Type III pantothenate kinase from Kosmotoga olearia (strain ATCC BAA-1733 / DSM 21960 / TBF 19.5.1).